Here is a 148-residue protein sequence, read N- to C-terminus: Large ribosomal subunit protein bL9 (148 aa).

Belongs to the bacterial ribosomal protein bL9 family.

In terms of biological role, binds to the 23S rRNA. The protein is Large ribosomal subunit protein bL9 of Pseudomonas putida (strain ATCC 700007 / DSM 6899 / JCM 31910 / BCRC 17059 / LMG 24140 / F1).